The primary structure comprises 594 residues: Parathyroid hormone/parathyroid hormone-related peptide receptor (594 aa).

The first 28 residues, 1–28, serve as a signal peptide directing secretion; the sequence is MGTARIAPGLALLLCCPVLSSAYALVDA. Over 29–188 the chain is Extracellular; it reads DDVMTKEEQI…TREREVFDRL (160 aa). Cystine bridges form between Cys48/Cys117, Cys108/Cys149, and Cys132/Cys171. Positions 66–102 are disordered; the sequence is DKGWTSASTSGKPRKDKASGKLYPESEEDKEAPTDSR. Asn152, Asn162, Asn167, and Asn177 each carry an N-linked (GlcNAc...) asparagine glycan. The helical transmembrane segment at 189-209 threads the bilayer; it reads GMIYTVGYSMSLASLTVAVLI. Topologically, residues 210 to 223 are cytoplasmic; the sequence is LAYFRRLHCTRNYI. The helical transmembrane segment at 224 to 244 threads the bilayer; that stretch reads HMHLFLSFMLRAVSIFVKDAV. Topologically, residues 245–295 are extracellular; sequence LYSGATLDEAERLTEEELRAIAQAPPPPATAAAGYAGCRVAVTFFLYFLAT. A helical transmembrane segment spans residues 296–316; it reads NYYWILVEGLYLHSLIFMAFF. Over 317 to 319 the chain is Cytoplasmic; sequence SEK. Residues 320–340 traverse the membrane as a helical segment; the sequence is KYLWGFTVFGWGLPAVFVAVW. Topologically, residues 341–361 are extracellular; it reads VSVRATLANTGCWDLSSGNKK. The helical transmembrane segment at 362-382 threads the bilayer; the sequence is WIIQVPILASIVLHFILFINI. At 383–405 the chain is on the cytoplasmic side; the sequence is VRVLATKLRETNAGRCDTRQQYR. A helical membrane pass occupies residues 406 to 426; the sequence is KLLKSTLVLMPLFGVHYIVFM. The Extracellular portion of the chain corresponds to 427–440; that stretch reads ATPYTEVSGTLWQV. A helical membrane pass occupies residues 441–461; it reads QMHYEMLFNSFQGFFVAIIYC. The Cytoplasmic portion of the chain corresponds to 462–594; sequence FCNGEVQAEI…LLQEEWETVM (133 aa). Residues 475-478 carry the Important for interaction with G proteins motif; the sequence is WSRW. A disordered region spans residues 525 to 594; that stretch reads PTATTNGHPQ…LLQEEWETVM (70 aa). Positions 543–558 are enriched in low complexity; sequence TPALETLETTPPATAA. At Thr552 the chain carries Phosphothreonine.

The protein belongs to the G-protein coupled receptor 2 family. As to quaternary structure, homodimer in the absence of bound ligand. Peptide hormone binding leads to dissociation of the homodimer. N-glycosylated.

The protein localises to the cell membrane. Its function is as follows. G-protein-coupled receptor for parathyroid hormone (PTH) and for parathyroid hormone-related peptide (PTHLH). Ligand binding causes a conformation change that triggers signaling via guanine nucleotide-binding proteins (G proteins) and modulates the activity of downstream effectors, such as adenylate cyclase (cAMP). PTH1R is coupled to G(s) G alpha proteins and mediates activation of adenylate cyclase activity. PTHLH dissociates from PTH1R more rapidly than PTH; as consequence, the cAMP response induced by PTHLH decays faster than the response induced by PTH. The sequence is that of Parathyroid hormone/parathyroid hormone-related peptide receptor (PTH1R) from Pongo abelii (Sumatran orangutan).